The primary structure comprises 288 residues: UTP--glucose-1-phosphate uridylyltransferase (288 aa).

This sequence belongs to the UDPGP type 2 family.

The catalysed reaction is alpha-D-glucose 1-phosphate + UTP + H(+) = UDP-alpha-D-glucose + diphosphate. It functions in the pathway glycolipid metabolism; diglucosyl-diacylglycerol biosynthesis. Catalyzes the formation of UDP-glucose from glucose-1-phosphate and UTP. This is an intermediate step in the biosynthesis of diglucosyl-diacylglycerol (Glc2-DAG), i.e. a glycolipid found in the membrane, which is also used as a membrane anchor for lipoteichoic acid (LTA). The chain is UTP--glucose-1-phosphate uridylyltransferase (gtaB) from Staphylococcus haemolyticus (strain JCSC1435).